Here is a 1204-residue protein sequence, read N- to C-terminus: ATP-dependent helicase/nuclease subunit A (1204 aa).

A UvrD-like helicase ATP-binding domain is found at 2–469; the sequence is TNFTKEQDQA…IILADNFRST (468 aa). An ATP-binding site is contributed by 23–30; the sequence is ASAGSGKT. In terms of domain architecture, UvrD-like helicase C-terminal spans 497 to 784; the sequence is GQLQFGASYY…KLMTIHASKG (288 aa).

It belongs to the helicase family. AddA subfamily. As to quaternary structure, heterodimer of AddA and AddB/RexB. It depends on Mg(2+) as a cofactor.

The enzyme catalyses Couples ATP hydrolysis with the unwinding of duplex DNA by translocating in the 3'-5' direction.. It carries out the reaction ATP + H2O = ADP + phosphate + H(+). Its function is as follows. The heterodimer acts as both an ATP-dependent DNA helicase and an ATP-dependent, dual-direction single-stranded exonuclease. Recognizes the chi site generating a DNA molecule suitable for the initiation of homologous recombination. The AddA nuclease domain is required for chi fragment generation; this subunit has the helicase and 3' -&gt; 5' nuclease activities. In Lactobacillus gasseri (strain ATCC 33323 / DSM 20243 / BCRC 14619 / CIP 102991 / JCM 1131 / KCTC 3163 / NCIMB 11718 / NCTC 13722 / AM63), this protein is ATP-dependent helicase/nuclease subunit A.